We begin with the raw amino-acid sequence, 68 residues long: MVYYPELFVWVSQEPFPNKDMEGRLPKGRLPVPKEVNRKKNDETNAASLTPLGSSELRSPRISYLHFF.

The disordered stretch occupies residues Glu22 to Ser54. Positions Thr44 to Ser54 are enriched in polar residues. Position 59 is a phosphoserine (Ser59).

Interacts with the latency-associated peptides (LAP) of TGFB1 and TGFB2; the interaction results in a decrease in TGFB autoinduction. Interacts with FLNA. In terms of processing, phosphorylated on Ser-59. Phosphorylation decreases stability and activity. As to expression, expressed in lung (at protein level).

Its subcellular location is the cytoplasm. Functionally, may have roles in neural function. Ectopic expression augments motility of gliomas. Also promotes axonal regeneration. May also have functions in cellular differentiation. Induces differentiation of fibroblast into myofibroblast and myofibroblast ameboid migration. Increases retinoic-acid regulation of lipid-droplet biogenesis. Down-regulates the expression of TGFB1 and TGFB2 but not of TGFB3. May play a role in the regulation of alveolar generation. The protein is Neuronal regeneration-related protein (NREP) of Homo sapiens (Human).